The primary structure comprises 431 residues: uncharacterized protein (431 aa).

Disordered regions lie at residues 1 to 37 (MFWRRLRPGAQDLAPKGLPGDGDFRRSSDPRLPKLTP) and 102 to 132 (PPPLLSAGASRESAPRQPGPGERERPRRRVA). The segment covering 22–32 (GDFRRSSDPRL) has biased composition (basic and acidic residues). Low complexity predominate over residues 106–121 (LSAGASRESAPRQPGP). The span at 122–132 (GERERPRRRVA) shows a compositional bias: basic and acidic residues.

The protein localises to the cytoplasm. This is an uncharacterized protein from Homo sapiens (Human).